The following is a 1737-amino-acid chain: Myosin-M heavy chain (1737 aa).

The Myosin N-terminal SH3-like domain occupies 4–55 (LEGDIVWVPHTVNGYCRGKIIGYNEKNQVTVRLLELNEEIKINEQLIQNYNQ). The region spanning 59–886 (KDFSDMVEIQ…LYIYLEKKRY (828 aa)) is the Myosin motor domain. 154-161 (GESGSGKT) contributes to the ATP binding site. Residues 640 to 727 (KSNDNNSNNN…NNNSSNNKKS (88 aa)) form a disordered region. Composition is skewed to low complexity over residues 641–663 (SNDN…SSQS) and 679–724 (NSGS…SSNN). Residues 754-761 (YIRCIKPN) are actin-binding. IQ domains follow at residues 889–918 (LVDS…SSLF) and 912–941 (NKES…LENK). Residues 926–1039 (QRAKKDFEQL…KKKNEQNLSL (114 aa)) are a coiled coil. Residues 947 to 1028 (RKKELERQRK…IEKKRKEEEK (82 aa)) are compositionally biased toward basic and acidic residues. Disordered regions lie at residues 947–1099 (RKKE…PSTK), 1117–1199 (LHGS…PNFN), 1266–1290 (GINK…ANSS), and 1304–1364 (SLST…SNED). Low complexity predominate over residues 1044–1070 (ITNSPSLINTTTTTTTTTTTTTNTSSP). Over residues 1071 to 1081 (PLSPPISPRPS) the composition is skewed to pro residues. The segment covering 1082-1098 (TPSSTSSSSSTTSSPST) has biased composition (low complexity). Residues 1121-1131 (SHSDKNSKEDN) are compositionally biased toward basic and acidic residues. A compositionally biased stretch (low complexity) spans 1132 to 1141 (NSNNNNNGDS). Polar residues predominate over residues 1143-1153 (IILSSDSSFGQ). A compositionally biased stretch (pro residues) spans 1162–1171 (PTPPPPPPLK). Composition is skewed to polar residues over residues 1180–1198 (GVEN…SPNF) and 1274–1288 (RTIS…SRAN). The segment covering 1304–1359 (SLSTSTTPSTPTTPKTPTTLSSSSVSTSTSLSSVSSSVSSSSSSSIPTPIIESTPS) has biased composition (low complexity). Residues 1389-1572 (FRIKIINELI…SDIVQSINEA (184 aa)) enclose the DH domain. Positions 1603-1714 (TLLMEGTVSA…WFKQIKALIQ (112 aa)) constitute a PH domain.

Belongs to the TRAFAC class myosin-kinesin ATPase superfamily. Myosin family. As to quaternary structure, monomer.

It localises to the cytoplasm. Its function is as follows. Myosins are actin-based motor molecules with ATPase activity. Involved in macropinocytosis and remodeling of actin cytoskeleton. In Dictyostelium discoideum (Social amoeba), this protein is Myosin-M heavy chain (myoM).